Reading from the N-terminus, the 1190-residue chain is Plakophilin-4 (1190 aa).

Residues 1–32 (MPAPEQGSLVEEGQPQTHQEAVSTGPGMEPET) are disordered. A coiled-coil region spans residues 36–63 (TILASVKEQELQFQRLTRELEVERQIVA). Residues 73 to 347 (AESPSIASTS…KRSGMTAVPQ (275 aa)) form a disordered region. Position 75 is a phosphoserine (Ser75). Positions 77-86 (SIASTSSTEK) are enriched in polar residues. A Phosphothreonine modification is found at Thr84. A phosphoserine mark is found at Ser106, Ser132, Ser136, and Ser139. 3 stretches are compositionally biased toward polar residues: residues 138-156 (GSLGNSRSSTQMNSYSDSG), 163-203 (FHNS…QPSV), and 213-229 (SVPSRAQSPSYVTSTGV). Phosphoserine occurs at positions 220, 230, and 235. Low complexity predominate over residues 230–241 (SPSRGSLRTSLG). Polar residues predominate over residues 247-266 (PSVTDSRPLNPSAYSSSTLP). Residues Arg253 and Arg269 each carry the omega-N-methylarginine modification. Residues Ser272, Ser280, Ser313, Ser326, and Ser336 each carry the phosphoserine modification. Polar residues predominate over residues 289 to 323 (SVTSRQTSNPNGPVPQYQTTTRVGSPLTLTDAQTR). The span at 324–337 (VASPSQGQVGSSSP) shows a compositional bias: low complexity. A Phosphotyrosine modification is found at Tyr371. 3 positions are modified to phosphoserine: Ser391, Ser402, and Ser405. Phosphothreonine is present on Thr411. Phosphotyrosine is present on Tyr414. A phosphoserine mark is found at Ser421, Ser426, and Ser437. A Phosphotyrosine modification is found at Tyr477. 3 positions are modified to phosphoserine: Ser509, Ser511, and Ser514. ARM repeat units follow at residues 517-556 (KDPREFAWRDPELPEVIHMLQHQFPSVQANAAAYLQHLCF), 559-598 (NKVKMEVYRLGGIKHLVDLLDHRVLEVQKNACGALRNLVF), and 603-643 (DENK…NLSS). Positions 772–781 (GKESPSKDSE) are enriched in basic and acidic residues. Residues 772–809 (GKESPSKDSEPSCWGKKKKKKKRTPQEDQWDGVGPIPG) are disordered. Ser775 is subject to Phosphoserine. The ARM 4 repeat unit spans residues 861-900 (AYIRAAVRKEKGLPILVELLRMDNDRVVSSVATALRNMAL). Thr1012 and Thr1016 each carry phosphothreonine. Phosphoserine is present on residues Ser1044, Ser1090, Ser1099, and Ser1133.

The protein belongs to the beta-catenin family. In terms of assembly, interacts (via the C-terminus) with FRMPD2 (via the PDZ 2 domain). Interacts with PDZD2. Interacts with RHOA; the interaction is detected at the midbody. Interacts with ECT2; the interaction is detected at the midbody. Interacts with CCDC85B.

The protein resides in the cell junction. It localises to the desmosome. It is found in the cytoplasm. The protein localises to the cytoskeleton. Its subcellular location is the spindle. The protein resides in the spindle pole. It localises to the midbody. It is found in the cell membrane. Plays a role as a regulator of Rho activity during cytokinesis. May play a role in junctional plaques. This Mus musculus (Mouse) protein is Plakophilin-4 (Pkp4).